Reading from the N-terminus, the 351-residue chain is Quinolinate phosphoribosyltransferase [decarboxylating] 2b, mitochondrial (351 aa).

Substrate is bound by residues arginine 142, 173–175, arginine 197, lysine 207, glutamate 240, aspartate 267, 299–301, and 320–322; these read TRK, SGN, and SGA.

The protein belongs to the NadC/ModD family. In terms of tissue distribution, expressed in roots and flowers.

The protein localises to the mitochondrion. The enzyme catalyses nicotinate beta-D-ribonucleotide + CO2 + diphosphate = quinolinate + 5-phospho-alpha-D-ribose 1-diphosphate + 2 H(+). Its pathway is alkaloid biosynthesis; nicotine biosynthesis. The protein operates within cofactor biosynthesis; NAD(+) biosynthesis; nicotinate D-ribonucleotide from quinolinate: step 1/1. In terms of biological role, involved in the biosynthesis of pyridine alkaloid natural products, leading mainly to the production of anabasine, anatabine, nicotine and nornicotine, effective deterrents against herbivores with antiparasitic and pesticide properties (neurotoxins); nornicotine serves as the precursor in the synthesis of the carcinogen compound N'-nitrosonornicotine (NNN). Involved in the catabolism of quinolinic acid (QA). The chain is Quinolinate phosphoribosyltransferase [decarboxylating] 2b, mitochondrial from Nicotiana tabacum (Common tobacco).